A 104-amino-acid polypeptide reads, in one-letter code: L-rhamnose mutarotase (104 aa).

Tyr-18 is a substrate binding site. Catalysis depends on His-22, which acts as the Proton donor. Substrate-binding positions include Tyr-41 and 76–77; that span reads WW.

The protein belongs to the rhamnose mutarotase family. As to quaternary structure, homodimer.

It is found in the cytoplasm. It catalyses the reaction alpha-L-rhamnose = beta-L-rhamnose. It participates in carbohydrate metabolism; L-rhamnose metabolism. Functionally, involved in the anomeric conversion of L-rhamnose. The chain is L-rhamnose mutarotase from Oceanobacillus iheyensis (strain DSM 14371 / CIP 107618 / JCM 11309 / KCTC 3954 / HTE831).